Consider the following 229-residue polypeptide: Peptidase E (229 aa).

Residues serine 120, aspartate 135, and histidine 157 each act as charge relay system in the active site.

Belongs to the peptidase S51 family.

It localises to the cytoplasm. The enzyme catalyses Dipeptidase E catalyzes the hydrolysis of dipeptides Asp-|-Xaa. It does not act on peptides with N-terminal Glu, Asn or Gln, nor does it cleave isoaspartyl peptides.. Its function is as follows. Hydrolyzes dipeptides containing N-terminal aspartate residues. May play a role in allowing the cell to use peptide aspartate to spare carbon otherwise required for the synthesis of the aspartate family of amino acids. The polypeptide is Peptidase E (Shigella sonnei (strain Ss046)).